The sequence spans 264 residues: Thymidylate synthase (264 aa).

Arg-21 provides a ligand contact to dUMP. A (6R)-5,10-methylene-5,6,7,8-tetrahydrofolate-binding site is contributed by His-51. 126–127 (RR) is a dUMP binding site. Residue Cys-146 is the Nucleophile of the active site. Residues 166–169 (RSAD), Asn-177, and 207–209 (HLY) contribute to the dUMP site. Asp-169 is a binding site for (6R)-5,10-methylene-5,6,7,8-tetrahydrofolate. Ala-263 contacts (6R)-5,10-methylene-5,6,7,8-tetrahydrofolate.

This sequence belongs to the thymidylate synthase family. Bacterial-type ThyA subfamily. Homodimer.

The protein localises to the cytoplasm. It carries out the reaction dUMP + (6R)-5,10-methylene-5,6,7,8-tetrahydrofolate = 7,8-dihydrofolate + dTMP. The protein operates within pyrimidine metabolism; dTTP biosynthesis. In terms of biological role, catalyzes the reductive methylation of 2'-deoxyuridine-5'-monophosphate (dUMP) to 2'-deoxythymidine-5'-monophosphate (dTMP) while utilizing 5,10-methylenetetrahydrofolate (mTHF) as the methyl donor and reductant in the reaction, yielding dihydrofolate (DHF) as a by-product. This enzymatic reaction provides an intracellular de novo source of dTMP, an essential precursor for DNA biosynthesis. The polypeptide is Thymidylate synthase (Hahella chejuensis (strain KCTC 2396)).